The chain runs to 682 residues: Potassium-transporting ATPase ATP-binding subunit (682 aa).

Helical transmembrane passes span 34–54 (PVMFVVWAGSVLTTLLTLAMV), 58–78 (IAGSALFTGIISLWLWFTVLF), 219–239 (IALTILLIALTIVFLLATATL), and 254–274 (VLVALLVCLIPTTIGGLLSAI). Asp307 acts as the 4-aspartylphosphate intermediate in catalysis. Residues Asp344, Glu348, 377–384 (FTAQSRMS), and Lys395 contribute to the ATP site. Residues Asp518 and Asp522 each contribute to the Mg(2+) site. 3 consecutive transmembrane segments (helical) span residues 588-608 (FAIIPAAFAATYPQLNALNVM), 616-636 (AILSAVIFNALIIIFLIPLAL), and 662-682 (LLVPFIGIKVIDVLLTLLGLA).

This sequence belongs to the cation transport ATPase (P-type) (TC 3.A.3) family. Type IA subfamily. The system is composed of three essential subunits: KdpA, KdpB and KdpC.

The protein localises to the cell inner membrane. It catalyses the reaction K(+)(out) + ATP + H2O = K(+)(in) + ADP + phosphate + H(+). Functionally, part of the high-affinity ATP-driven potassium transport (or Kdp) system, which catalyzes the hydrolysis of ATP coupled with the electrogenic transport of potassium into the cytoplasm. This subunit is responsible for energy coupling to the transport system and for the release of the potassium ions to the cytoplasm. The chain is Potassium-transporting ATPase ATP-binding subunit from Salmonella dublin (strain CT_02021853).